A 168-amino-acid polypeptide reads, in one-letter code: Short form salivary protein D7R2 (168 aa).

Residues 1 to 21 form the signal peptide; it reads MFKKLLLSVGLVWCLISLGQA. Intrachain disulfides connect C30–C62, C43–C168, and C101–C120. Noradrenaline contacts are provided by E31 and R46. Residue E31 coordinates serotonin. H59, Y118, D135, and E138 together coordinate serotonin. Positions 118, 135, and 138 each coordinate histamine. Noradrenaline is bound by residues D135 and E138.

This sequence belongs to the PBP/GOBP family. As to expression, female saliva (at protein level). Female salivary gland. Not detected in female carcass without salivary glands. Not detected in male tissues.

The protein resides in the secreted. Functionally, modulates blood feeding of female mosquitoes on vertebrate species by binding and sequestering different mediators involved in the host response. Binds serotonin, noradrenaline, histamine and adrenaline. Inhibits histamine-, serotonin- and noradrenaline-induced smooth muscle contraction. Exhibits vasodilating activity. In Anopheles gambiae (African malaria mosquito), this protein is Short form salivary protein D7R2.